The following is a 667-amino-acid chain: WD repeat-containing protein 48 homolog (667 aa).

WD repeat units follow at residues 26–65 (QHRN…NDKY), 71–110 (HHND…CMST), 113–152 (THRD…ALTA), 164–203 (GSKD…RSMK), 206–245 (GHTE…CIQT), 248–287 (VHKE…NKML), 290–329 (EEKA…RCTL), and 349–388 (KGGA…KKEE). Residues 591–615 (ETTPSGGNANNSLQNSQSDANSEGS) are disordered.

The protein belongs to the WD repeat WDR48 family. Catalytic component of the Usp12-46 deubiquitylase complex consisting of Usp12-46, Wdr20 and Uaf1; regulatory subunit that, together wtih Wdr20, stabilizes Usp12-46. The Usp12-46 deubiquitylase complex associates with arr/arrow; the interaction leads to deubiquitination and stabilization of arr/arrow.

Its function is as follows. Regulatory component of the Usp12-46 deubiquitylase complex. activates deubiquitination by increasing the catalytic turnover without increasing the affinity of deubiquitinating enzymes for the substrate. The complex deubiquitylates the wg/wingless-signaling receptor arr/arrow, which stabilizes the receptor and increases its concentration at the cell surface; this enhances the sensitivity of cells to wg/wingless-signal stimulation. This increases the amplitude and spatial range of the signaling response to the wg/wingless morphogen gradient, facilitating the precise concentration-dependent regulation of its target genes. Together with Wdr20 and Usp12-46 required for wg/wingless-mediated signaling in the wing imaginal disc and for wg/wingless-dependent regulation of intestinal stem cell proliferation. This chain is WD repeat-containing protein 48 homolog, found in Drosophila virilis (Fruit fly).